Reading from the N-terminus, the 160-residue chain is Protein FrzA (160 aa).

The 142-residue stretch at 14–155 (EQEFFCFRVG…FSKLLQTARQ (142 aa)) folds into the CheW-like domain.

Functionally, necessary for proper aggregation of cells to form fruiting bodies. FRZ genes define a system of signal transduction analogous to the enterobacterial chemotaxis systems. In Myxococcus xanthus, this protein is Protein FrzA (frzA).